Consider the following 919-residue polypeptide: Isoleucine--tRNA ligase (919 aa).

Residues 57–67 (PYANGDIHMGT) carry the 'HIGH' region motif. Glutamate 552 contributes to the L-isoleucyl-5'-AMP binding site. A 'KMSKS' region motif is present at residues 593 to 597 (KMSKS). Position 596 (lysine 596) interacts with ATP. Residues cysteine 886, cysteine 889, cysteine 906, and cysteine 909 each contribute to the Zn(2+) site.

It belongs to the class-I aminoacyl-tRNA synthetase family. IleS type 1 subfamily. As to quaternary structure, monomer. Requires Zn(2+) as cofactor.

The protein localises to the cytoplasm. The catalysed reaction is tRNA(Ile) + L-isoleucine + ATP = L-isoleucyl-tRNA(Ile) + AMP + diphosphate. Its function is as follows. Catalyzes the attachment of isoleucine to tRNA(Ile). As IleRS can inadvertently accommodate and process structurally similar amino acids such as valine, to avoid such errors it has two additional distinct tRNA(Ile)-dependent editing activities. One activity is designated as 'pretransfer' editing and involves the hydrolysis of activated Val-AMP. The other activity is designated 'posttransfer' editing and involves deacylation of mischarged Val-tRNA(Ile). This is Isoleucine--tRNA ligase from Petrotoga mobilis (strain DSM 10674 / SJ95).